Here is a 59-residue protein sequence, read N- to C-terminus: Large ribosomal subunit protein bL33 (59 aa).

Belongs to the bacterial ribosomal protein bL33 family.

The sequence is that of Large ribosomal subunit protein bL33 from Prosthecochloris aestuarii (strain DSM 271 / SK 413).